We begin with the raw amino-acid sequence, 565 residues long: Mannosyl-oligosaccharide 1,2-alpha-mannosidase (565 aa).

Cysteines 320 and 363 form a disulfide. Glu-378 (proton donor) is an active-site residue. Thr-501 contributes to the Ca(2+) binding site. Basic and acidic residues-rich tracts occupy residues 526–538 and 550–565; these read NEKAQMRESKVID and KSADQEAKEIIEEIAG. The tract at residues 526–565 is disordered; sequence NEKAQMRESKVIDKSNLPEAQPVDKSADQEAKEIIEEIAG.

This sequence belongs to the glycosyl hydrolase 47 family. Requires Ca(2+) as cofactor.

It catalyses the reaction N(4)-(alpha-D-Man-(1-&gt;2)-alpha-D-Man-(1-&gt;2)-alpha-D-Man-(1-&gt;3)-[alpha-D-Man-(1-&gt;2)-alpha-D-Man-(1-&gt;3)-[alpha-D-Man-(1-&gt;2)-alpha-D-Man-(1-&gt;6)]-alpha-D-Man-(1-&gt;6)]-beta-D-Man-(1-&gt;4)-beta-D-GlcNAc-(1-&gt;4)-beta-D-GlcNAc)-L-asparaginyl-[protein] (N-glucan mannose isomer 9A1,2,3B1,2,3) + 4 H2O = N(4)-(alpha-D-Man-(1-&gt;3)-[alpha-D-Man-(1-&gt;3)-[alpha-D-Man-(1-&gt;6)]-alpha-D-Man-(1-&gt;6)]-beta-D-Man-(1-&gt;4)-beta-D-GlcNAc-(1-&gt;4)-beta-D-GlcNAc)-L-asparaginyl-[protein] (N-glucan mannose isomer 5A1,2) + 4 beta-D-mannose. The catalysed reaction is N(4)-(alpha-D-Man-(1-&gt;2)-alpha-D-Man-(1-&gt;2)-alpha-D-Man-(1-&gt;3)-[alpha-D-Man-(1-&gt;3)-[alpha-D-Man-(1-&gt;2)-alpha-D-Man-(1-&gt;6)]-alpha-D-Man-(1-&gt;6)]-beta-D-Man-(1-&gt;4)-beta-D-GlcNAc-(1-&gt;4)-beta-D-GlcNAc)-L-asparaginyl-[protein] (N-glucan mannose isomer 8A1,2,3B1,3) + 3 H2O = N(4)-(alpha-D-Man-(1-&gt;3)-[alpha-D-Man-(1-&gt;3)-[alpha-D-Man-(1-&gt;6)]-alpha-D-Man-(1-&gt;6)]-beta-D-Man-(1-&gt;4)-beta-D-GlcNAc-(1-&gt;4)-beta-D-GlcNAc)-L-asparaginyl-[protein] (N-glucan mannose isomer 5A1,2) + 3 beta-D-mannose. It functions in the pathway protein modification; protein glycosylation. Involved in the maturation of Asn-linked oligosaccharides. Trim a single alpha-1,2-linked mannose residue from Man(9)GlcNAc(2) to produce Man(8)GlcNAc(2). The sequence is that of Mannosyl-oligosaccharide 1,2-alpha-mannosidase (MNS1) from Candida albicans (Yeast).